The chain runs to 322 residues: Secreted RxLR effector protein RXLR-C17 (322 aa).

An N-terminal signal peptide occupies residues 1–25; it reads MREPAFSFRLHLFAAMILLVDVFSA. Positions 43–62 match the RxLR-dEER motif; sequence RQLRARDSQAKNYVIRDEER. Asn-73 carries N-linked (GlcNAc...) asparagine glycosylation.

This sequence belongs to the RxLR effector family.

The protein localises to the secreted. The protein resides in the host cytoplasm. Its subcellular location is the host nucleus. Functionally, secreted effector that suppresses pattern-triggered immunity (PTI) in plant host. The sequence is that of Secreted RxLR effector protein RXLR-C17 from Plasmopara halstedii (Downy mildew of sunflower).